We begin with the raw amino-acid sequence, 370 residues long: Pyruvate dehydrogenase E1 component subunit alpha (370 aa).

In terms of assembly, heterodimer of an alpha and a beta chain. The cofactor is thiamine diphosphate.

It catalyses the reaction N(6)-[(R)-lipoyl]-L-lysyl-[protein] + pyruvate + H(+) = N(6)-[(R)-S(8)-acetyldihydrolipoyl]-L-lysyl-[protein] + CO2. In terms of biological role, the pyruvate dehydrogenase complex catalyzes the overall conversion of pyruvate to acetyl-CoA and CO(2). It contains multiple copies of three enzymatic components: pyruvate dehydrogenase (E1), dihydrolipoamide acetyltransferase (E2) and lipoamide dehydrogenase (E3). The chain is Pyruvate dehydrogenase E1 component subunit alpha (pdhA) from Staphylococcus aureus (strain COL).